The primary structure comprises 171 residues: ATP synthase subunit b (171 aa).

A helical membrane pass occupies residues Phe2–Leu22.

Belongs to the ATPase B chain family. In terms of assembly, F-type ATPases have 2 components, F(1) - the catalytic core - and F(0) - the membrane proton channel. F(1) has five subunits: alpha(3), beta(3), gamma(1), delta(1), epsilon(1). F(0) has three main subunits: a(1), b(2) and c(10-14). The alpha and beta chains form an alternating ring which encloses part of the gamma chain. F(1) is attached to F(0) by a central stalk formed by the gamma and epsilon chains, while a peripheral stalk is formed by the delta and b chains.

Its subcellular location is the cell inner membrane. In terms of biological role, f(1)F(0) ATP synthase produces ATP from ADP in the presence of a proton or sodium gradient. F-type ATPases consist of two structural domains, F(1) containing the extramembraneous catalytic core and F(0) containing the membrane proton channel, linked together by a central stalk and a peripheral stalk. During catalysis, ATP synthesis in the catalytic domain of F(1) is coupled via a rotary mechanism of the central stalk subunits to proton translocation. Functionally, component of the F(0) channel, it forms part of the peripheral stalk, linking F(1) to F(0). The chain is ATP synthase subunit b from Helicobacter pylori (strain HPAG1).